Consider the following 284-residue polypeptide: RNase adapter protein RapZ (284 aa).

Gly8–Ser15 contacts ATP. Asp56–Asn59 is a GTP binding site. The interval Arg266–Pro284 is RNA-binding.

It belongs to the RapZ-like family. RapZ subfamily. Homotrimer.

Its function is as follows. Modulates the synthesis of GlmS, by affecting the processing and stability of the regulatory small RNA GlmZ. When glucosamine-6-phosphate (GlcN6P) concentrations are high in the cell, RapZ binds GlmZ and targets it to cleavage by RNase E. Consequently, GlmZ is inactivated and unable to activate GlmS synthesis. Under low GlcN6P concentrations, RapZ is sequestered and inactivated by an other regulatory small RNA, GlmY, preventing GlmZ degradation and leading to synthesis of GlmS. This Shigella dysenteriae serotype 1 (strain Sd197) protein is RNase adapter protein RapZ.